The following is a 354-amino-acid chain: Probable tartrate dehydrogenase/decarboxylase (354 aa).

Residues Asp221, Asp245, and Asp249 each coordinate Mn(2+).

This sequence belongs to the isocitrate and isopropylmalate dehydrogenases family. Mg(2+) is required as a cofactor. The cofactor is Mn(2+). Requires K(+) as cofactor.

The catalysed reaction is tartrate + NAD(+) = 2-hydroxy-3-oxosuccinate + NADH + H(+). It carries out the reaction (2R,3S)-tartrate + NAD(+) = 2-hydroxy-3-oxosuccinate + NADH + H(+). It catalyses the reaction (2R,3R)-tartrate + NAD(+) = 2-hydroxy-3-oxosuccinate + NADH + H(+). The enzyme catalyses (2R,3R)-tartrate + H(+) = (R)-glycerate + CO2. The catalysed reaction is (R)-malate + NAD(+) = pyruvate + CO2 + NADH. Has multiple catalytic activities. Apart from catalyzing the oxidation of (+)-tartrate to oxaloglycolate, also converts meso-tartrate to D-glycerate and catalyzes the oxidative decarboxylation of D-malate to pyruvate. The sequence is that of Probable tartrate dehydrogenase/decarboxylase (ycsA) from Bacillus subtilis (strain 168).